We begin with the raw amino-acid sequence, 695 residues long: Variediene synthase (695 aa).

The segment at 1–23 is disordered; that stretch reads MVPTSLSPDDTSDPVPRSSSDIQ. Residues 7-332 are terpene cyclase; sequence SPDDTSDPVP…PRYHPWLCEE (326 aa). Asp-98 contributes to the Mg(2+) binding site. Substrate is bound by residues Asp-98, 184–187, Asn-228, 232–236, and 324–325; these read RIID, SFDIE, and RY. Residues 98 to 102 carry the DDXXD 1 motif; that stretch reads DNVVE. The short motif at 228 to 236 is the NSE/DTE element; that stretch reads NDYFSFDIE. The disordered stretch occupies residues 353–392; it reads RRSISGDSISSESSVWSGASDRSARSSVSSAPSLDEGKEP. Over residues 357-385 the composition is skewed to low complexity; sequence SGDSISSESSVWSGASDRSARSSVSSAPS. Isopentenyl diphosphate is bound by residues Lys-415, Arg-418, and His-447. Positions 454 and 458 each coordinate Mg(2+). The short motif at 454-458 is the DDXXD 2 element; the sequence is DDIED. Arg-463 contacts dimethylallyl diphosphate. Residue Arg-464 coordinates isopentenyl diphosphate. The dimethylallyl diphosphate site is built by Lys-541, Thr-542, Gln-579, Asn-586, Lys-595, and Lys-605.

This sequence in the N-terminal section; belongs to the terpene synthase family. It in the C-terminal section; belongs to the FPP/GGPP synthase family. Hexamer. It depends on Mg(2+) as a cofactor.

The catalysed reaction is isopentenyl diphosphate + (2E,6E)-farnesyl diphosphate = (2E,6E,10E)-geranylgeranyl diphosphate + diphosphate. It catalyses the reaction (2E,6E,10E)-geranylgeranyl diphosphate = variediene + diphosphate. It functions in the pathway secondary metabolite biosynthesis; terpenoid biosynthesis. Bifunctional terpene synthase converts DMAPP and IPP, and also GGPP, into variediene as a single product. The C-terminal prenyltransferase domain of AbVS catalyzes formation of GGPP, whereas the N-terminal terpene cyclase domain catalyzes the cyclization of GGPP to variediene. In Aspergillus brasiliensis (strain CBS 101740 / IMI 381727 / IBT 21946), this protein is Variediene synthase.